Consider the following 658-residue polypeptide: Alkyldihydroxyacetonephosphate synthase, peroxisomal (658 aa).

Over residues M1–A24 the composition is skewed to low complexity. A disordered region spans residues M1 to R37. The transit peptide at M1–C58 directs the protein to the peroxisome. Over residues A25–G35 the composition is skewed to basic and acidic residues. Residue S65 is modified to Phosphoserine. T74 carries the post-translational modification Phosphothreonine. N6-acetyllysine is present on K102. An FAD-binding PCMH-type domain is found at F202–T384. Residues P234–S240, D303–T309, and T316–S319 each bind FAD. K347 carries the N6-acetyllysine modification. E368–I374 provides a ligand contact to FAD. Substrate is bound at residue R515. Y578 acts as the Proton donor/acceptor in catalysis. Important for enzyme activity stretches follow at residues H615–H617 and N654–L658.

The protein belongs to the FAD-binding oxidoreductase/transferase type 4 family. Homodimer. FAD is required as a cofactor.

Its subcellular location is the peroxisome membrane. It is found in the peroxisome. The enzyme catalyses a long chain fatty alcohol + a 1-acylglycerone 3-phosphate = a 1-O-alkylglycerone 3-phosphate + a long-chain fatty acid + H(+). It carries out the reaction hexadecan-1-ol + 1-hexadecanoylglycerone 3-phosphate = 1-O-hexadecylglycerone 3-phosphate + hexadecanoate + H(+). The catalysed reaction is 1-hexadecanoylglycerone 3-phosphate + a long-chain fatty acid = a 1-acylglycerone 3-phosphate + hexadecanoate. It functions in the pathway glycerolipid metabolism; ether lipid biosynthesis. Its activity is regulated as follows. Inhibited by N-ethylmaleimide, p-bromophenacylbromide, 2,4- dinitrofluorobenzene and divalent cations such as such as Mn(2+), Mg(2+) and Zn(2+). Inhibition by p-bromophenacylbromide is strongly pH dependent and is highest at alkaline conditions. In terms of biological role, catalyzes the exchange of the acyl chain in acyl-dihydroxyacetonephosphate (acyl-DHAP) for a long chain fatty alcohol, yielding the first ether linked intermediate, i.e. alkyl-dihydroxyacetonephosphate (alkyl-DHAP), in the pathway of ether lipid biosynthesis. This Cavia porcellus (Guinea pig) protein is Alkyldihydroxyacetonephosphate synthase, peroxisomal (AGPS).